The following is a 564-amino-acid chain: O-fucosyltransferase 5 (564 aa).

The interval 1–28 (MVRNSSDEEEDHRNLIPQNDTRDNDLNL) is disordered. The helical; Signal-anchor for type II membrane protein transmembrane segment at 70-90 (YVVAAVSLTLFVGLLFLFTDT) threads the bilayer. N-linked (GlcNAc...) asparagine glycans are attached at residues asparagine 129, asparagine 134, and asparagine 174. Substrate contacts are provided by residues 413-415 (HLR) and 529-530 (TF).

The protein belongs to the glycosyltransferase GT106 family.

Its subcellular location is the membrane. The protein operates within glycan metabolism. The sequence is that of O-fucosyltransferase 5 from Arabidopsis thaliana (Mouse-ear cress).